The chain runs to 216 residues: Probable GTP-binding protein EngB (216 aa).

The EngB-type G domain occupies 21–192 (DAPQIALAGR…WRELRALAAG (172 aa)). GTP contacts are provided by residues 29–36 (GRSNVGKS), 56–60 (GKTRS), 75–78 (DLPG), 142–145 (TKGD), and 170–173 (VTAS). Residues Ser36 and Thr58 each contribute to the Mg(2+) site. The interval 195 to 216 (SADDEAEDAPSDTIDAIDDVTA) is disordered. Residues 196–216 (ADDEAEDAPSDTIDAIDDVTA) show a composition bias toward acidic residues.

Belongs to the TRAFAC class TrmE-Era-EngA-EngB-Septin-like GTPase superfamily. EngB GTPase family. It depends on Mg(2+) as a cofactor.

Functionally, necessary for normal cell division and for the maintenance of normal septation. This Nitratidesulfovibrio vulgaris (strain DP4) (Desulfovibrio vulgaris) protein is Probable GTP-binding protein EngB.